The primary structure comprises 180 residues: Protein SPMIP9 (180 aa).

Microtubule inner protein component of sperm flagellar doublet microtubules. As to expression, only detected after the mouse is 35 days old. Expression increases gradually from day 35 to 6 months, and remains stable after 54 days. Exclusively expressed in the epididymis and testis.

Its subcellular location is the nucleus. It localises to the cytoplasm. It is found in the cytoskeleton. The protein localises to the flagellum axoneme. Functionally, microtubule inner protein (MIP) part of the dynein-decorated doublet microtubules (DMTs) in flagella axoneme. The polypeptide is Protein SPMIP9 (Spmip9) (Mus musculus (Mouse)).